Consider the following 148-residue polypeptide: Putative pre-16S rRNA nuclease (148 aa).

This sequence belongs to the YqgF nuclease family.

It localises to the cytoplasm. In terms of biological role, could be a nuclease involved in processing of the 5'-end of pre-16S rRNA. This chain is Putative pre-16S rRNA nuclease, found in Colwellia psychrerythraea (strain 34H / ATCC BAA-681) (Vibrio psychroerythus).